A 331-amino-acid polypeptide reads, in one-letter code: Tetraacyldisaccharide 4'-kinase (331 aa).

60-67 (TVGGTGKT) lines the ATP pocket.

Belongs to the LpxK family.

It catalyses the reaction a lipid A disaccharide + ATP = a lipid IVA + ADP + H(+). It participates in glycolipid biosynthesis; lipid IV(A) biosynthesis; lipid IV(A) from (3R)-3-hydroxytetradecanoyl-[acyl-carrier-protein] and UDP-N-acetyl-alpha-D-glucosamine: step 6/6. Its function is as follows. Transfers the gamma-phosphate of ATP to the 4'-position of a tetraacyldisaccharide 1-phosphate intermediate (termed DS-1-P) to form tetraacyldisaccharide 1,4'-bis-phosphate (lipid IVA). This is Tetraacyldisaccharide 4'-kinase from Pseudomonas syringae pv. syringae (strain B728a).